Here is a 461-residue protein sequence, read N- to C-terminus: Argininosuccinate lyase (461 aa).

Belongs to the lyase 1 family. Argininosuccinate lyase subfamily.

It is found in the cytoplasm. The catalysed reaction is 2-(N(omega)-L-arginino)succinate = fumarate + L-arginine. It functions in the pathway amino-acid biosynthesis; L-arginine biosynthesis; L-arginine from L-ornithine and carbamoyl phosphate: step 3/3. In Dehalococcoides mccartyi (strain ATCC BAA-2100 / JCM 16839 / KCTC 5957 / BAV1), this protein is Argininosuccinate lyase.